The chain runs to 181 residues: uncharacterized protein (181 aa).

Residues 35 to 175 enclose the Nudix hydrolase domain; the sequence is LRHRCVFVWA…ARLRAWRGAS (141 aa). Residues 72–94 carry the Nudix box motif; it reads GGVVGAGESYDDAALREAEEELG. The Mg(2+) site is built by E88 and E92.

It belongs to the Nudix hydrolase family. It depends on Mg(2+) as a cofactor.

This is an uncharacterized protein from Streptomyces coelicolor (strain ATCC BAA-471 / A3(2) / M145).